We begin with the raw amino-acid sequence, 292 residues long: 33 kDa chaperonin (292 aa).

2 disulfides stabilise this stretch: cysteine 230–cysteine 232 and cysteine 263–cysteine 266.

Belongs to the HSP33 family. Post-translationally, under oxidizing conditions two disulfide bonds are formed involving the reactive cysteines. Under reducing conditions zinc is bound to the reactive cysteines and the protein is inactive.

It is found in the cytoplasm. Redox regulated molecular chaperone. Protects both thermally unfolding and oxidatively damaged proteins from irreversible aggregation. Plays an important role in the bacterial defense system toward oxidative stress. This is 33 kDa chaperonin from Escherichia coli O7:K1 (strain IAI39 / ExPEC).